Consider the following 417-residue polypeptide: Phosphoglycerate kinase 1 (417 aa).

Position 2 is an N-acetylserine (Ser2). Residues Ser2 and Ser4 each carry the phosphoserine modification. Lys6 is subject to N6-succinyllysine. Lys11 carries the N6-acetyllysine modification. (2R)-3-phosphoglycerate contacts are provided by Val23, Asp24, Phe25, Asn26, Gln38, and Arg39. The segment at 38–43 is mitochondrial targeting region exposed following cis-trans isomerization by PIN1 and recognized by the TOM complex for mitochondrial translocation of the protein; sequence QRIKAA. Residue Lys48 is modified to N6-acetyllysine; alternate. N6-succinyllysine; alternate is present on Lys48. Positions 62, 63, 65, and 66 each coordinate (2R)-3-phosphoglycerate. N6-acetyllysine is present on Lys75. Tyr76 carries the post-translational modification Phosphotyrosine. N6-acetyllysine occurs at positions 86 and 91. Residue Lys97 is modified to N6-acetyllysine; alternate. Residue Lys97 is modified to N6-(2-hydroxyisobutyryl)lysine; alternate. Positions 122 and 123 each coordinate (2R)-3-phosphoglycerate. N6-acetyllysine; alternate is present on Lys131. The residue at position 131 (Lys131) is an N6-malonyllysine; alternate. Lys146 is modified (N6-acetyllysine). The (2R)-3-phosphoglycerate site is built by His170 and Arg171. Lys191 is subject to N6-succinyllysine. A Phosphotyrosine modification is found at Tyr196. Lys199 carries the N6-acetyllysine modification. Phosphoserine; by MAPK1 is present on Ser203. Gly214 lines the ADP pocket. Residue Gly214 coordinates CDP. Residues Ala215 and Lys216 each coordinate AMP. ATP is bound at residue Ala215. Ala215 is a Mg(2+) binding site. N6-(2-hydroxyisobutyryl)lysine is present on Lys216. Ala218 and Asp219 together coordinate Mg(2+). CDP is bound at residue Asp219. AMP is bound at residue Lys220. Position 220 (Lys220) interacts with ATP. Lys220 carries the post-translational modification N6-(2-hydroxyisobutyryl)lysine. Gly238 lines the ADP pocket. Gly238 contributes to the CDP binding site. Gly239 serves as a coordination point for AMP. Residue Gly239 coordinates ATP. Residues Lys267 and Lys291 each carry the N6-acetyllysine modification. Gly313 contacts AMP. Residue Gly313 participates in ATP binding. Lys323 carries the N6-(2-hydroxyisobutyryl)lysine modification. Positions 338, 340, and 343 each coordinate CDP. Phe343 contacts ADP. Residue Glu344 participates in AMP binding. Glu344 is a binding site for ATP. Lys361 is modified (N6-acetyllysine). Residues Asp375 and Thr376 each contribute to the ATP site. Asp375 is a Mg(2+) binding site.

It belongs to the phosphoglycerate kinase family. As to quaternary structure, monomer. Interacts with kinase MAPK1/ERK2; the interaction is direct, occurs under hypoxic conditions, and promotes its interaction with PIN1. Interacts with peptidyl-prolyl cis-trans isomerase PIN1; the interaction is direct, occurs under hypoxic conditions, and targets the protein to the mitochondrion by promoting interactions with the TOM complex. Interacts with mitochondrial circRNA mcPGK1 (via its 2nd stem-loop); the interaction is direct and targets the protein to the mitochondrion by promoting interactions with the TOM complex. Interacts with pyruvate dehydrogenase kinase PDK1; the interaction is direct, occurs under hypoxic conditions and leads to PDK1-mediated inhibition of pyruvate dehydrogenase complex activity. It depends on Mg(2+) as a cofactor. Post-translationally, phosphorylated at Ser-203 by MAPK1/ERK2 under hypoxic conditions, which promotes its mitochondrial targeting. In terms of tissue distribution, mainly expressed in spermatogonia. Localized on the principle piece in the sperm (at protein level). Expression significantly decreased in the testis of elderly men.

The protein localises to the cytoplasm. It is found in the cytosol. It localises to the mitochondrion matrix. It carries out the reaction (2R)-3-phosphoglycerate + ATP = (2R)-3-phospho-glyceroyl phosphate + ADP. It catalyses the reaction L-seryl-[protein] + ATP = O-phospho-L-seryl-[protein] + ADP + H(+). It participates in carbohydrate degradation; glycolysis; pyruvate from D-glyceraldehyde 3-phosphate: step 2/5. With respect to regulation, specifically inhibited by heterocyclic compound CBR-470-0. In terms of biological role, catalyzes one of the two ATP producing reactions in the glycolytic pathway via the reversible conversion of 1,3-diphosphoglycerate to 3-phosphoglycerate. Both L- and D- forms of purine and pyrimidine nucleotides can be used as substrates, but the activity is much lower on pyrimidines. In addition to its role as a glycolytic enzyme, it seems that PGK1 acts as a polymerase alpha cofactor protein (primer recognition protein). Acts as a protein kinase when localized to the mitochondrion where it phosphorylates pyruvate dehydrogenase kinase PDK1 to inhibit pyruvate dehydrogenase complex activity and suppress the formation of acetyl-coenzyme A from pyruvate, and consequently inhibit oxidative phosphorylation and promote glycolysis. May play a role in sperm motility. This Homo sapiens (Human) protein is Phosphoglycerate kinase 1 (PGK1).